A 676-amino-acid chain; its full sequence is Probable LRR receptor-like serine/threonine-protein kinase At4g31250 (676 aa).

Positions 1-26 (MTRDDKFPIVYSLLLIVLLFVSPIYG) are cleaved as a signal peptide. Residues 27-242 (DGDADALLKF…LLPCRYTRPP (216 aa)) are Extracellular-facing. N-linked (GlcNAc...) asparagine glycans are attached at residues N42, N73, and N83. LRR repeat units follow at residues 98–122 (IRGLKSISFMRNHFEGKIPRGIDGL), 123–146 (VSLAHLYLAHNQFTGEIDGDLFSG), 148–171 (KALLKVHLEGNRFSGEIPESLGKL), 172–195 (PKLTELNLEDNMFTGKIPAFKQKN), and 197–218 (VTVNVANNQLEGRIPLTLGLMN). N-linked (GlcNAc...) asparagine glycosylation occurs at N218. The chain crosses the membrane as a helical span at residues 243–263 (FFTVFLLALTILAVVVLITVF). Over 264-676 (LSVCILSRRQ…RAMTEEFSLM (413 aa)) the chain is Cytoplasmic. The segment covering 319–330 (TVQRDSTATSGA) has biased composition (polar residues). A disordered region spans residues 319–347 (TVQRDSTATSGAISVGGLSPDEDKRGDQR). In terms of domain architecture, Protein kinase spans 366–640 (RASAEVLGSG…HEAVDRIEEV (275 aa)). A Phosphoserine modification is found at S368. Residues 372–380 (LGSGGFGSS) and K394 each bind ATP. Phosphoserine is present on residues S446 and S543. Residues 641–676 (DRDAGGGQESVRSSYVTASDGDHRSSRAMTEEFSLM) are disordered.

It belongs to the protein kinase superfamily. Ser/Thr protein kinase family.

Its subcellular location is the membrane. It carries out the reaction L-seryl-[protein] + ATP = O-phospho-L-seryl-[protein] + ADP + H(+). The enzyme catalyses L-threonyl-[protein] + ATP = O-phospho-L-threonyl-[protein] + ADP + H(+). The protein is Probable LRR receptor-like serine/threonine-protein kinase At4g31250 of Arabidopsis thaliana (Mouse-ear cress).